A 148-amino-acid polypeptide reads, in one-letter code: MKMELKVKPIENGTVIDHISGSKALKVYKILNIEEKLPITLALNVPSKKGVMKDILKIEGLELTRDDVNKIALISPDATINIIKEGIVIKKFKVNLPKRIDGIIKCTNPNCITNKENIEGKFSIEQKNTLKIRCEYCEKFINSIIISK.

Zn(2+)-binding residues include C106, C111, C134, and C137.

This sequence belongs to the PyrI family. As to quaternary structure, contains catalytic and regulatory chains. It depends on Zn(2+) as a cofactor.

Involved in allosteric regulation of aspartate carbamoyltransferase. This Methanococcus maripaludis (strain C6 / ATCC BAA-1332) protein is Aspartate carbamoyltransferase regulatory chain.